A 234-amino-acid polypeptide reads, in one-letter code: C2H2-type zinc-finger transcription factor clz7 (234 aa).

Disordered stretches follow at residues 45 to 99 and 118 to 154; these read RPEG…SRVD and SAQPDFEDWGDLGDLMPEVLPESSGTSSGAATDNGTA. 2 stretches are compositionally biased toward low complexity: residues 66–77 and 140–154; these read SQSSNTSPTSES and SSGTSSGAATDNGTA. The C2H2-type 1; degenerate zinc-finger motif lies at 159 to 184; it reads NRCWDHGCNGKKFLNHSNLVRHRREN. Residues 191 to 223 form a C2H2-type 2; degenerate zinc finger; the sequence is FICPMCGAYFSRSTARNQHLEKKSCNRVRRYSN.

Belongs to the GLI C2H2-type zinc-finger protein family.

It is found in the nucleus. Functionally, transcription factor that probably regulates the expression of the gene cluster that mediates the biosynthesis of squalestatin S1 (SQS1, also known as zaragozic acid A), a heavily oxidized fungal polyketide that offers potent cholesterol lowering activity by targeting squalene synthase (SS). In Cochliobolus lunatus (Filamentous fungus), this protein is C2H2-type zinc-finger transcription factor clz7.